Reading from the N-terminus, the 417-residue chain is Alpha-galactosidase (417 aa).

A signal peptide spans 1–55 (MARASSSSSPPSPRLLLLLLVAVAATLLPEAAALGNFTAESRGARWRSRRARRRA). Residues Trp-71, Asp-106, Asp-107, Cys-156, Lys-183, Asp-185, Trp-219, Arg-236, and Asp-240 each contribute to the alpha-D-galactose site. 2 disulfides stabilise this stretch: Cys-76–Cys-108 and Cys-156–Cys-187. Asp-185 acts as the Nucleophile in catalysis. Asp-240 acts as the Proton donor in catalysis.

This sequence belongs to the glycosyl hydrolase 27 family.

It carries out the reaction Hydrolysis of terminal, non-reducing alpha-D-galactose residues in alpha-D-galactosides, including galactose oligosaccharides, galactomannans and galactolipids.. It catalyses the reaction melibiose + H2O = D-galactose + D-glucose. The catalysed reaction is raffinose + H2O = sucrose + D-galactose. The enzyme catalyses stachyose + H2O = raffinose + D-galactose. It carries out the reaction alpha-D-Gal-(1-&gt;6)-beta-D-Man-(1-&gt;4)-beta-D-Man-(1-&gt;4)-D-Man + H2O = beta-D-Man-(1-&gt;4)-beta-D-Man-(1-&gt;4)-D-Man + D-galactose. It catalyses the reaction beta-D-Man-(1-&gt;4)-[alpha-D-Gal-(1-&gt;6)]-beta-D-Man-(1-&gt;4)-beta-D-Man-(1-&gt;4)-D-Man + H2O = beta-D-Man-(1-&gt;4)-beta-D-Man-(1-&gt;4)-beta-D-Man-(1-&gt;4)-D-Man + D-galactose. With respect to regulation, 1 mM Hg(2+) and Ag(2+) decrease activity by 98% and 96%, respectively. 1 mM Para-chloromercuribenzoic acid (PCMB) completely inhibits enzymatic activity. Hydrolyzes melibiose, raffinose and stachyose in the following decreasing order of reactivity: raffinose, melibiose, stachyose. Acts on both the terminal alpha-galactosyl residue and the side-chain alpha-galactosyl residue of the galactomanno-oligosaccharides. The polypeptide is Alpha-galactosidase (Oryza sativa subsp. japonica (Rice)).